Here is an 86-residue protein sequence, read N- to C-terminus: RNA-binding protein Hfq (86 aa).

The Sm domain maps to 9–68 (DPYLNTLRKEKVGVSIYLVNGIKLQGTIESFDQFVILLKNTVSQMVYKHAISTVVPVRPI).

Belongs to the Hfq family. Homohexamer.

In terms of biological role, RNA chaperone that binds small regulatory RNA (sRNAs) and mRNAs to facilitate mRNA translational regulation in response to envelope stress, environmental stress and changes in metabolite concentrations. Also binds with high specificity to tRNAs. The polypeptide is RNA-binding protein Hfq (Pseudomonas fluorescens (strain ATCC BAA-477 / NRRL B-23932 / Pf-5)).